We begin with the raw amino-acid sequence, 152 residues long: MSETKHTLHTPGWVSDFQKFIMRGNVLDLAVGVVIGAAFSAIVGSAVKDILTPFIGLITGGVDFSNLFITLKGPVKDTLAEAQKAGAVTVNIGVFLNAVIQFLIIAFFIFWLTRILSKLSRKQEAAPAAPPAPTKEEVLLTEIRDLLAQKNS.

A run of 3 helical transmembrane segments spans residues 26-46, 50-70, and 92-112; these read VLDL…VGSA, ILTP…LFIT, and IGVF…IFWL.

This sequence belongs to the MscL family. Homopentamer.

The protein localises to the cell inner membrane. Its function is as follows. Channel that opens in response to stretch forces in the membrane lipid bilayer. May participate in the regulation of osmotic pressure changes within the cell. The chain is Large-conductance mechanosensitive channel from Gluconobacter oxydans (strain 621H) (Gluconobacter suboxydans).